A 500-amino-acid polypeptide reads, in one-letter code: MDVFKQSEVWFVIGSQNLYGPKTLQQVMDNAHHVVNSLNSEAGLPVKLVLKPLVTTPDEITALCREANYDTACIGVMTWLHTFSPAKMWIGGLSILHKPLLQFHTQFNAQIPWETMDMDFMNLNQTAHGGREFGFIGARMRQQHSVITGHWQDKEAHQRISQWMRVAAAKQENQQLKVARFGDNMREVAVTEGDKVAAQIQFGYSVNAYGIGDLVTVVDAVSKGEIDALVEEYEATYRLTDAVQLHGNKRENLLDAARIELGMKRFLEQGGFKAFTTNFENLYGLKQLPGLAVQRLMQQGYGFGGEGDWKTAALLRILKVMGTGLKGGTSFMEDYTYNFQPGNDLVVGSHMLEVCPSIAKEEKPLLDVQHLGIGGKADPARLIFSTPAGPALNASLIDMGNRFRLLVNVVDTVEQPHPLPKLPVARAIWQAQPSLATAAEAWIIAGGAHHTVFSQAIGVDELRLYAEMHGIEFLLIDNDTTLPAFKNEIRWNEVYYHLNR.

Mn(2+) is bound by residues E306, E333, H350, and H450.

This sequence belongs to the arabinose isomerase family. As to quaternary structure, homohexamer. Mn(2+) is required as a cofactor.

The catalysed reaction is beta-L-arabinopyranose = L-ribulose. The protein operates within carbohydrate degradation; L-arabinose degradation via L-ribulose; D-xylulose 5-phosphate from L-arabinose (bacterial route): step 1/3. Functionally, catalyzes the conversion of L-arabinose to L-ribulose. In Yersinia enterocolitica serotype O:8 / biotype 1B (strain NCTC 13174 / 8081), this protein is L-arabinose isomerase.